We begin with the raw amino-acid sequence, 480 residues long: Probable histone deacetylase 1-B (480 aa).

The tract at residues lysine 10–aspartate 321 is histone deacetylase. Histidine 141 is an active-site residue. Residues aspartate 387–valine 480 are disordered. The segment covering proline 401–cysteine 416 has biased composition (basic and acidic residues). The segment covering aspartate 417–glycine 427 has biased composition (acidic residues). The span at valine 443–valine 480 shows a compositional bias: basic and acidic residues.

Belongs to the histone deacetylase family. HD type 1 subfamily. In terms of assembly, found in a large complex with RBBP4 and MI-2.

Its subcellular location is the nucleus. The protein resides in the cytoplasm. The catalysed reaction is N(6)-acetyl-L-lysyl-[histone] + H2O = L-lysyl-[histone] + acetate. The enzyme catalyses N(6)-acetyl-L-lysyl-[protein] + H2O = L-lysyl-[protein] + acetate. It catalyses the reaction N(6)-(2E)-butenoyl-L-lysyl-[protein] + H2O = (2E)-2-butenoate + L-lysyl-[protein]. In terms of biological role, histone deacetylase that catalyzes the deacetylation of lysine residues on the N-terminal part of the core histones (H2A, H2B, H3 and H4). Histone deacetylation gives a tag for epigenetic repression and plays an important role in transcriptional regulation, cell cycle progression and developmental events. Histone deacetylases act via the formation of large multiprotein complexes. Also functions as a deacetylase for non-histone proteins. In addition to protein deacetylase activity, also has protein-lysine deacylase activity: acts as a protein decrotonylase by mediating decrotonylation ((2E)-butenoyl) of histones. The chain is Probable histone deacetylase 1-B (hdac1-b) from Xenopus laevis (African clawed frog).